We begin with the raw amino-acid sequence, 155 residues long: 3-hydroxyacyl-[acyl-carrier-protein] dehydratase FabZ (155 aa).

Histidine 59 is a catalytic residue.

The protein belongs to the thioester dehydratase family. FabZ subfamily.

It localises to the cytoplasm. The catalysed reaction is a (3R)-hydroxyacyl-[ACP] = a (2E)-enoyl-[ACP] + H2O. In terms of biological role, involved in unsaturated fatty acids biosynthesis. Catalyzes the dehydration of short chain beta-hydroxyacyl-ACPs and long chain saturated and unsaturated beta-hydroxyacyl-ACPs. The protein is 3-hydroxyacyl-[acyl-carrier-protein] dehydratase FabZ of Bartonella quintana (strain Toulouse) (Rochalimaea quintana).